Consider the following 151-residue polypeptide: Putative truncated GMC-type inactive oxidoreductase L893 (151 aa).

The protein belongs to the GMC oxidoreductase family.

It localises to the virion. The polypeptide is Putative truncated GMC-type inactive oxidoreductase L893 (Acanthamoeba polyphaga (Amoeba)).